Here is a 377-residue protein sequence, read N- to C-terminus: N-acetyldiaminopimelate deacetylase (377 aa).

Residue Asp70 is part of the active site. Glu129 serves as the catalytic Proton acceptor.

It belongs to the peptidase M20A family. N-acetyldiaminopimelate deacetylase subfamily.

The enzyme catalyses N-acetyl-(2S,6S)-2,6-diaminopimelate + H2O = (2S,6S)-2,6-diaminopimelate + acetate. It functions in the pathway amino-acid biosynthesis; L-lysine biosynthesis via DAP pathway; LL-2,6-diaminopimelate from (S)-tetrahydrodipicolinate (acetylase route): step 3/3. Its function is as follows. Catalyzes the conversion of N-acetyl-diaminopimelate to diaminopimelate and acetate. The polypeptide is N-acetyldiaminopimelate deacetylase (Geobacillus thermodenitrificans (strain NG80-2)).